Reading from the N-terminus, the 164-residue chain is Ubiquitin-conjugating enzyme E2 2 (164 aa).

The region spanning proline 4–glutamate 150 is the UBC core domain. Cysteine 88 functions as the Glycyl thioester intermediate in the catalytic mechanism.

It belongs to the ubiquitin-conjugating enzyme family.

Its subcellular location is the cytoplasm. It localises to the nucleus. It carries out the reaction S-ubiquitinyl-[E1 ubiquitin-activating enzyme]-L-cysteine + [E2 ubiquitin-conjugating enzyme]-L-cysteine = [E1 ubiquitin-activating enzyme]-L-cysteine + S-ubiquitinyl-[E2 ubiquitin-conjugating enzyme]-L-cysteine.. It participates in protein modification; protein ubiquitination. Catalyzes the covalent attachment of ubiquitin to other proteins. Plays a role in transcription regulation by catalyzing the monoubiquitination of histone H2B to form H2BK123ub1. H2BK123ub1 gives a specific tag for epigenetic transcriptional activation and is also a prerequisite for H3K4me and H3K79me formation. Also involved in postreplication repair of UV-damaged DNA, in N-end rule-dependent protein degradation and in sporulation. This chain is Ubiquitin-conjugating enzyme E2 2 (UBC2), found in Kluyveromyces lactis (strain ATCC 8585 / CBS 2359 / DSM 70799 / NBRC 1267 / NRRL Y-1140 / WM37) (Yeast).